The following is a 644-amino-acid chain: Exoribonuclease 2 (644 aa).

The RNB domain maps to 189–516; sequence REDLTALDFV…NHRLLKAVIK (328 aa). An S1 motif domain is found at 561–643; sequence DTRFAAEIVD…ETRSIIARPV (83 aa).

The protein belongs to the RNR ribonuclease family. RNase II subfamily.

The protein localises to the cytoplasm. The catalysed reaction is Exonucleolytic cleavage in the 3'- to 5'-direction to yield nucleoside 5'-phosphates.. Functionally, involved in mRNA degradation. Hydrolyzes single-stranded polyribonucleotides processively in the 3' to 5' direction. This is Exoribonuclease 2 from Escherichia coli O8 (strain IAI1).